Consider the following 200-residue polypeptide: Pyridoxal phosphate homeostasis protein (200 aa).

Lysine 11 carries the post-translational modification N6-(pyridoxal phosphate)lysine.

This sequence belongs to the pyridoxal phosphate-binding protein YggS/PROSC family. In terms of assembly, monomer.

Pyridoxal 5'-phosphate (PLP)-binding protein, which is involved in PLP homeostasis. This is Pyridoxal phosphate homeostasis protein from Buchnera aphidicola subsp. Acyrthosiphon pisum (strain APS) (Acyrthosiphon pisum symbiotic bacterium).